The following is a 183-amino-acid chain: Large ribosomal subunit protein uL6 (183 aa).

It belongs to the universal ribosomal protein uL6 family. Part of the 50S ribosomal subunit.

Functionally, this protein binds to the 23S rRNA, and is important in its secondary structure. It is located near the subunit interface in the base of the L7/L12 stalk, and near the tRNA binding site of the peptidyltransferase center. The protein is Large ribosomal subunit protein uL6 of Malacoplasma penetrans (strain HF-2) (Mycoplasma penetrans).